Reading from the N-terminus, the 470-residue chain is Zinc finger protein weckle (470 aa).

The tract at residues 1 to 103 is required for homodimerization; the sequence is MGVPTSDWIY…DALRLEYGLP (103 aa). In terms of domain architecture, ZAD spans 10–82; sequence YWCRLCARDD…SKVQAIFELL (73 aa). Cysteine 12, cysteine 15, cysteine 55, and cysteine 58 together coordinate Zn(2+). Residues 156–265 are disordered; it reads NSDPKVLASP…LSMSPHGSQS (110 aa). Serine 168 carries the phosphoserine modification. Residues 195–208 are compositionally biased toward acidic residues; that stretch reads ESDDEEAILDEDEA. Positions 214 to 225 are enriched in basic residues; it reads LKRKRGRPKGSG. Positions 237 to 254 are enriched in basic and acidic residues; it reads TSREPDDNAKSKQDDKTS. Residues 255-265 show a composition bias toward polar residues; the sequence is ELSMSPHGSQS. 6 C2H2-type zinc fingers span residues 271–294, 300–322, 328–350, 355–377, 383–405, and 411–434; these read YPCK…HDMH, YVCD…QLVH, CICP…SQTH, FECN…KYVH, FKCE…LLGH, and YVCK…WKKH.

As to quaternary structure, homodimer. Interacts with Myd88 and Toll.

It localises to the cell membrane. Functionally, acts as an adapter to assemble/stabilize a Toll/wek/Myd88/tube complex; required for efficient recruitment of Myd88 to Toll. Dispensable for innate immune response; plays a minimal role, if any, in the immune defense against Gram-positive bacteria and fungi. Involved in dorsoventral axis determination. This chain is Zinc finger protein weckle, found in Drosophila melanogaster (Fruit fly).